Consider the following 572-residue polypeptide: Putative two-component response regulator ARR13 (572 aa).

One can recognise a Response regulatory domain in the interval 17–134 (NVMVVDDNRV…DLPKIYQFAL (118 aa)). D71 carries the 4-aspartylphosphate modification. The interval 175-225 (KKNCSSKSDTRTVNSTNVSHVSTNGSRKNRKRKPKGGPSDDGESLSQPPKK) is disordered. Over residues 179-197 (SSKSDTRTVNSTNVSHVST) the composition is skewed to polar residues. Positions 224–227 (KKKK) match the Nuclear localization signal motif. Residues 227 to 277 (KIWWTNPLQDLFLQAIQHIGYDKVVPKKILAIMNVPYLTRENVASHLQKYR) constitute a DNA-binding region (myb-like GARP). A compositionally biased stretch (polar residues) spans 509 to 522 (NQDQSNGESSNTIA). Residues 509 to 531 (NQDQSNGESSNTIATPETNTPNF) form a disordered region.

It belongs to the ARR family. Type-B subfamily. As to quaternary structure, binds the target DNA as a monomer. Post-translationally, two-component system major event consists of a His-to-Asp phosphorelay between a sensor histidine kinase (HK) and a response regulator (RR). In plants, the His-to-Asp phosphorelay involves an additional intermediate named Histidine-containing phosphotransfer protein (HPt). This multistep phosphorelay consists of a His-Asp-His-Asp sequential transfer of a phosphate group between first a His and an Asp of the HK protein, followed by the transfer to a conserved His of the HPt protein and finally the transfer to an Asp in the receiver domain of the RR protein.

The protein localises to the nucleus. Functionally, putative transcriptional activator that binds specifically to the DNA sequence 5'-[AG]GATT-3'. Functions as a response regulator involved in His-to-Asp phosphorelay signal transduction system. Phosphorylation of the Asp residue in the receiver domain activates the ability of the protein to promote the transcription of target genes. Could directly activate some type-A response regulators in response to cytokinins. The sequence is that of Putative two-component response regulator ARR13 (ARR13) from Arabidopsis thaliana (Mouse-ear cress).